A 396-amino-acid polypeptide reads, in one-letter code: NADH-quinone oxidoreductase subunit D (396 aa).

This sequence belongs to the complex I 49 kDa subunit family. In terms of assembly, NDH-1 is composed of 14 different subunits. Subunits NuoB, C, D, E, F, and G constitute the peripheral sector of the complex.

The protein resides in the cell inner membrane. It catalyses the reaction a quinone + NADH + 5 H(+)(in) = a quinol + NAD(+) + 4 H(+)(out). In terms of biological role, NDH-1 shuttles electrons from NADH, via FMN and iron-sulfur (Fe-S) centers, to quinones in the respiratory chain. The immediate electron acceptor for the enzyme in this species is believed to be ubiquinone. Couples the redox reaction to proton translocation (for every two electrons transferred, four hydrogen ions are translocated across the cytoplasmic membrane), and thus conserves the redox energy in a proton gradient. The sequence is that of NADH-quinone oxidoreductase subunit D from Orientia tsutsugamushi (strain Ikeda) (Rickettsia tsutsugamushi).